A 311-amino-acid chain; its full sequence is Protoheme IX farnesyltransferase (311 aa).

A run of 8 helical transmembrane segments spans residues 19–39 (VLAY…VATI), 55–75 (ILAT…LNCV), 101–121 (NAFV…WWQA), 123–143 (LLSG…YTLG), 169–189 (AVTG…FFWT), 221–241 (VTKQ…ALVP), 242–262 (ATGV…LLMA), and 290–310 (VVFC…GSFF).

This sequence belongs to the UbiA prenyltransferase family. Protoheme IX farnesyltransferase subfamily.

Its subcellular location is the cell membrane. It carries out the reaction heme b + (2E,6E)-farnesyl diphosphate + H2O = Fe(II)-heme o + diphosphate. The protein operates within porphyrin-containing compound metabolism; heme O biosynthesis; heme O from protoheme: step 1/1. Its function is as follows. Converts heme B (protoheme IX) to heme O by substitution of the vinyl group on carbon 2 of heme B porphyrin ring with a hydroxyethyl farnesyl side group. This Nocardia farcinica (strain IFM 10152) protein is Protoheme IX farnesyltransferase.